Consider the following 223-residue polypeptide: MTQDQLKQAVAQAAVDFILPKLDDKSIVGVGTGSTANCFIDALAKHKAAFDGAVASSEATAARLKGHGIPVYELNTVSDLEFYVDGADESDEHLNLIKGGGAALTREKIVAAVAKTFICIADGSKLVPVLGAFPLPVEVIPMARSHVARQLVKLGGDPVYREGVLTDNGNIIIDVHNMSITNPVELEAQINAIVGVVTNGLFAARPADLLLLGTTEGVKTLTR.

Residues Thr32 to Thr35, Asp85 to Asp88, and Lys98 to Gly101 contribute to the substrate site. Glu107 acts as the Proton acceptor in catalysis. Substrate is bound at residue Lys125.

Belongs to the ribose 5-phosphate isomerase family. Homodimer.

The enzyme catalyses aldehydo-D-ribose 5-phosphate = D-ribulose 5-phosphate. It participates in carbohydrate degradation; pentose phosphate pathway; D-ribose 5-phosphate from D-ribulose 5-phosphate (non-oxidative stage): step 1/1. Its function is as follows. Catalyzes the reversible conversion of ribose-5-phosphate to ribulose 5-phosphate. The sequence is that of Ribose-5-phosphate isomerase A from Pseudomonas savastanoi pv. phaseolicola (strain 1448A / Race 6) (Pseudomonas syringae pv. phaseolicola (strain 1448A / Race 6)).